The following is a 190-amino-acid chain: UPF0301 protein PSPTO_5037 (190 aa).

The protein belongs to the UPF0301 (AlgH) family.

This chain is UPF0301 protein PSPTO_5037, found in Pseudomonas syringae pv. tomato (strain ATCC BAA-871 / DC3000).